Consider the following 278-residue polypeptide: MATH domain and coiled-coil domain-containing protein At1g31400 (278 aa).

The MATH domain maps to 6–131; the sequence is EKRITWTIKN…SGQVKIVAEV (126 aa). Residues 232–267 are a coiled coil; the sequence is KLDWLEKKLKEVGKTRMQQLEQNLKDLKESLCWSSD.

The chain is MATH domain and coiled-coil domain-containing protein At1g31400 from Arabidopsis thaliana (Mouse-ear cress).